Consider the following 310-residue polypeptide: MQAPPPEHCPGVESEQAGLVSACAGCPNQRICSDPNKKLEDPGKALVAAAMKDVKHKLLILSGKGGVGKSTVTTLLTRYLARSYPDSNFGVLDIDICGPSQPRLLGAVGENVHQSGSGWSPVGIDDNVCLMSIGFLLGSVDDAIIWRGPKKNGMIRQFLSEVDWGTLDLLLLDTPPGTSDEHLSVVSYLRDDSAPDSLKAIIVTTPQEVALLDVRKEINFCKKQRIPIVGVVENMSSFRCGNCGNSSEIFPAKTGGAAAMCQEMDVPLLGSLPLDPQVTRACDSGEDITAINNSTTEALATICSKIMASL.

Residues cysteine 9, cysteine 23, cysteine 26, and cysteine 32 each coordinate [4Fe-4S] cluster. 63–70 (GKGGVGKS) lines the ATP pocket. Residues cysteine 240 and cysteine 243 each coordinate [4Fe-4S] cluster.

Belongs to the Mrp/NBP35 ATP-binding proteins family. NUBP1/NBP35 subfamily. As to quaternary structure, heterotetramer of 2 Nubp1 and 2 Nubp2 chains. The cofactor is [4Fe-4S] cluster.

It localises to the cytoplasm. Component of the cytosolic iron-sulfur (Fe/S) protein assembly (CIA) machinery. Required for maturation of extramitochondrial Fe-S proteins. The Nubp1-Nubp2 heterotetramer forms a Fe-S scaffold complex, mediating the de novo assembly of an Fe-S cluster and its transfer to target apoproteins. This chain is Cytosolic Fe-S cluster assembly factor Nubp1 homolog, found in Drosophila mojavensis (Fruit fly).